A 668-amino-acid chain; its full sequence is Neurexin-3-beta (668 aa).

Residues methionine 1–serine 35 form the signal peptide. Residues serine 36–threonine 593 lie on the Extracellular side of the membrane. Positions alanine 84 to valine 284 constitute a Laminin G-like domain. Residues threonine 510–arginine 529 are disordered. The helical transmembrane segment at glycine 594–methionine 614 threads the bilayer. Over tyrosine 615–valine 668 the chain is Cytoplasmic. The segment at asparagine 636–valine 668 is disordered.

Belongs to the neurexin family. Post-translationally, processed by alpha-secretase leading to the formation of an extracellular soluble protein as well as a C-terminal membrane-embedded fragment (CTF). Proteolysis of these CTFs by gamma-secretase releases intracellular domains (ICDs) and extracellular peptides. Brain and arteries (at protein level).

It localises to the membrane. Functionally, neuronal cell surface protein that may be involved in cell recognition and cell adhesion. Plays a role in angiogenesis. This is Neurexin-3-beta (NRXN3) from Gallus gallus (Chicken).